Here is a 561-residue protein sequence, read N- to C-terminus: Potassium-transporting ATPase potassium-binding subunit (561 aa).

10 helical membrane passes run 4 to 24, 65 to 85, 134 to 154, 177 to 197, 253 to 273, 285 to 305, 380 to 400, 417 to 437, 484 to 504, and 528 to 548; these read IIMQDVFFIVLLLVLAIPLGI, AGSVLAFSAIGFVFVMAVLML, GLTVQNFVSAATGIAVLFAVI, LYILLPLSLVLAILLVSQGVV, FTNLIEMLAILLIPVALVVMF, AIMTAMMIVFVVGIVAITISE, GLYGMIGFIILTVFIAGLLVG, MVCLLILVPPLLTLFGTAFAV, MVGALMMLFARFIPLIAALYL, and FIGLLIGVVVLVGALSFLPAL.

It belongs to the KdpA family. As to quaternary structure, the system is composed of three essential subunits: KdpA, KdpB and KdpC.

The protein localises to the cell membrane. Functionally, part of the high-affinity ATP-driven potassium transport (or Kdp) system, which catalyzes the hydrolysis of ATP coupled with the electrogenic transport of potassium into the cytoplasm. This subunit binds the extracellular potassium ions and delivers the ions to the membrane domain of KdpB through an intramembrane tunnel. The chain is Potassium-transporting ATPase potassium-binding subunit from Listeria welshimeri serovar 6b (strain ATCC 35897 / DSM 20650 / CCUG 15529 / CIP 8149 / NCTC 11857 / SLCC 5334 / V8).